Consider the following 316-residue polypeptide: Methionyl-tRNA formyltransferase (316 aa).

117 to 120 (SLLP) contributes to the (6S)-5,6,7,8-tetrahydrofolate binding site.

Belongs to the Fmt family.

The enzyme catalyses L-methionyl-tRNA(fMet) + (6R)-10-formyltetrahydrofolate = N-formyl-L-methionyl-tRNA(fMet) + (6S)-5,6,7,8-tetrahydrofolate + H(+). Functionally, attaches a formyl group to the free amino group of methionyl-tRNA(fMet). The formyl group appears to play a dual role in the initiator identity of N-formylmethionyl-tRNA by promoting its recognition by IF2 and preventing the misappropriation of this tRNA by the elongation apparatus. The chain is Methionyl-tRNA formyltransferase from Janthinobacterium sp. (strain Marseille) (Minibacterium massiliensis).